A 544-amino-acid chain; its full sequence is Protein nucleotidyltransferase YdiU (544 aa).

Residues glycine 133, glycine 135, arginine 136, lysine 155, aspartate 167, glycine 168, arginine 218, and arginine 225 each coordinate ATP. The active-site Proton acceptor is the aspartate 294. The Mg(2+) site is built by asparagine 295 and aspartate 304. Aspartate 304 contributes to the ATP binding site.

This sequence belongs to the SELO family. Requires Mg(2+) as cofactor. It depends on Mn(2+) as a cofactor.

The enzyme catalyses L-seryl-[protein] + ATP = 3-O-(5'-adenylyl)-L-seryl-[protein] + diphosphate. The catalysed reaction is L-threonyl-[protein] + ATP = 3-O-(5'-adenylyl)-L-threonyl-[protein] + diphosphate. It carries out the reaction L-tyrosyl-[protein] + ATP = O-(5'-adenylyl)-L-tyrosyl-[protein] + diphosphate. It catalyses the reaction L-histidyl-[protein] + UTP = N(tele)-(5'-uridylyl)-L-histidyl-[protein] + diphosphate. The enzyme catalyses L-seryl-[protein] + UTP = O-(5'-uridylyl)-L-seryl-[protein] + diphosphate. The catalysed reaction is L-tyrosyl-[protein] + UTP = O-(5'-uridylyl)-L-tyrosyl-[protein] + diphosphate. Nucleotidyltransferase involved in the post-translational modification of proteins. It can catalyze the addition of adenosine monophosphate (AMP) or uridine monophosphate (UMP) to a protein, resulting in modifications known as AMPylation and UMPylation. The chain is Protein nucleotidyltransferase YdiU from Cupriavidus metallidurans (strain ATCC 43123 / DSM 2839 / NBRC 102507 / CH34) (Ralstonia metallidurans).